The chain runs to 610 residues: MSTAPAAFDIKTFLATLTGAPGVYKMLDRNGEVIYVGKAKNLKKRVASHFAQRGSSPKQNAMVARVQAIEVTVTRTEGEALLLENQLIKRHKPRYNINLRDDKSYPYIYVSTHQEFPRLAFHRGSRARPGRFFGPFPSAAAVRDSLKTLQKIFPVRQCEDSYFVNRTRPCLQYQIERCTGPCVGLVGAETYGEDVTNTLLFLEGRGEALIDRLAQRMEQAAQRLEFEKAARYRDQISNLRTVLAKQLVAGEQGDLDMIACAIKGNIACVHVVFVRNGQQIGDRSFFPRMQDEHDAAAVLGAFIPQFYLDKEIPRELLLSHEIRELELFESVLGQQAGRPVKISWRLRGERAKRLELARANAECALTTRLASQQTIADRLRHLTEMLGLAEPPKRMECFDISHTQGDQTVASCVVFDRTGPLKSAYRRFNIEGITGGDDYAAMAQALSRRYQRIRAGEVEAPDILFIDGGKGQIHAAARTLAELGVENIRIIGIAKGPDRKPGMETLFQTGCSDPIVVKPDNPGSLLIQHIRDEAHRFAITGHRQRRAKTVTRSPLQAIAGLGPKRRQRLLRQFGGLRQISRADVEALSSVEGINRQLAQRIYDLFHDHGA.

The 79-residue stretch at 19 to 97 (GAPGVYKMLD…IKRHKPRYNI (79 aa)) folds into the GIY-YIG domain. Residues 207-242 (EALIDRLAQRMEQAAQRLEFEKAARYRDQISNLRTV) form the UVR domain.

Belongs to the UvrC family. In terms of assembly, interacts with UvrB in an incision complex.

It is found in the cytoplasm. The UvrABC repair system catalyzes the recognition and processing of DNA lesions. UvrC both incises the 5' and 3' sides of the lesion. The N-terminal half is responsible for the 3' incision and the C-terminal half is responsible for the 5' incision. This chain is UvrABC system protein C, found in Methylococcus capsulatus (strain ATCC 33009 / NCIMB 11132 / Bath).